The primary structure comprises 637 residues: uncharacterized protein (637 aa).

The zn(2)-C6 fungal-type DNA-binding region spans Cys7–Cys34. Residues Ser304–Ser327 form a C2H2-type; degenerate zinc finger.

It localises to the nucleus. This is an uncharacterized protein from Schizosaccharomyces pombe (strain 972 / ATCC 24843) (Fission yeast).